Here is a 305-residue protein sequence, read N- to C-terminus: tRNA pseudouridine synthase B (305 aa).

Residue D41 is the Nucleophile of the active site.

It belongs to the pseudouridine synthase TruB family. Type 1 subfamily.

It carries out the reaction uridine(55) in tRNA = pseudouridine(55) in tRNA. Functionally, responsible for synthesis of pseudouridine from uracil-55 in the psi GC loop of transfer RNAs. This Prochlorococcus marinus subsp. pastoris (strain CCMP1986 / NIES-2087 / MED4) protein is tRNA pseudouridine synthase B.